A 429-amino-acid polypeptide reads, in one-letter code: Serum response factor-binding protein 1 (429 aa).

The residue at position 2 (alanine 2) is an N-acetylalanine. Coiled coils occupy residues 42–67 (KGTE…AMKE) and 108–146 (LLKK…NHSE). 2 disordered regions span residues 131 to 157 (AEVE…NGSN) and 176 to 429 (LAKK…TFDD). Residues 146–157 (ENTLYSNDNGSN) show a composition bias toward polar residues. Residues 183-195 (NSKEKIAKMEHGP) show a composition bias toward basic and acidic residues. Lysine 190 participates in a covalent cross-link: Glycyl lysine isopeptide (Lys-Gly) (interchain with G-Cter in SUMO2). Phosphoserine is present on residues serine 203, serine 205, serine 264, serine 279, and serine 281. Residues 249-265 (GGEEFCEEEKEYFDDST) are compositionally biased toward acidic residues. Over residues 296 to 341 (KESSCHSSVKEQKPLEKVFLKEDTGETHGDTRNDKIKPSTETRKLE) the composition is skewed to basic and acidic residues. Lysine 316 is covalently cross-linked (Glycyl lysine isopeptide (Lys-Gly) (interchain with G-Cter in SUMO2)). Phosphoserine is present on residues serine 349, serine 351, and serine 367. Over residues 357-367 (NFKEQAPKTRS) the composition is skewed to basic and acidic residues. The segment covering 373–383 (NEPQIKNQFNK) has biased composition (polar residues).

As to quaternary structure, interacts with SRF. Forms complexes with SRF and SRF cofactors ARID2, MYOCD and NKX2-5. Interacts with the N-terminus of SLC2A4. Abundantly expressed in heart and skeletal muscle, and at much lower levels in brain and lung.

It localises to the cytoplasm. The protein localises to the perinuclear region. In terms of biological role, may be involved in regulating transcriptional activation of cardiac genes during the aging process. May play a role in biosynthesis and/or processing of SLC2A4 in adipose cells. This chain is Serum response factor-binding protein 1, found in Homo sapiens (Human).